The chain runs to 90 residues: uncharacterized protein (90 aa).

A signal peptide spans M1 to S21. The tract at residues S56–Q90 is disordered. Over residues S66–Q90 the composition is skewed to low complexity. N81 is a glycosylation site (N-linked (GlcNAc...) asparagine).

This is an uncharacterized protein from Dictyostelium discoideum (Social amoeba).